The following is a 720-amino-acid chain: Secreted RxLR effector protein 138 (720 aa).

The signal sequence occupies residues 1–20 (MRSAFYVAIVLLVAAGSQTA). The RxLR-dEER signature appears at 56–71 (RNLKDDFMFSAGDEER). Residues 264–335 (ESNTRKRNNV…VAPPEPSRLD (72 aa)) form a disordered region. Over residues 320 to 335 (KQHDHRVAPPEPSRLD) the composition is skewed to basic and acidic residues. Residue N609 is glycosylated (N-linked (GlcNAc...) asparagine).

Belongs to the RxLR effector family.

The protein localises to the secreted. It localises to the host nucleus. Secreted effector that acts as an elicitor that induces cell death in host plant cells. The sequence is that of Secreted RxLR effector protein 138 from Plasmopara viticola (Downy mildew of grapevine).